A 212-amino-acid chain; its full sequence is Adenylate kinase (212 aa).

Position 10-15 (10-15) interacts with ATP; that stretch reads GAGKGT. An NMP region spans residues 30–59; it reads STGDMFRAAMANQTEMGRLAKSYIDKGELV. AMP-binding positions include T31, R36, 57 to 59, 86 to 89, and Q93; these read ELV and GYPR. The LID stretch occupies residues 127-159; sequence GRIINRKTGETFHKVFNPPVDYKEEDYYQREDD. ATP contacts are provided by residues R128 and 137-138; that span reads TF. Residues R156 and R167 each contribute to the AMP site. Q195 contacts ATP.

The protein belongs to the adenylate kinase family. Monomer.

It is found in the cytoplasm. The catalysed reaction is AMP + ATP = 2 ADP. The protein operates within purine metabolism; AMP biosynthesis via salvage pathway; AMP from ADP: step 1/1. Functionally, catalyzes the reversible transfer of the terminal phosphate group between ATP and AMP. Plays an important role in cellular energy homeostasis and in adenine nucleotide metabolism. This chain is Adenylate kinase, found in Streptococcus agalactiae serotype Ia (strain ATCC 27591 / A909 / CDC SS700).